The sequence spans 375 residues: Queuine tRNA-ribosyltransferase (375 aa).

Aspartate 89 functions as the Proton acceptor in the catalytic mechanism. Residues 89–93, aspartate 143, glutamine 187, and glycine 214 contribute to the substrate site; that span reads DSGGF. Residues 245-251 are RNA binding; sequence GVGKPED. The active-site Nucleophile is aspartate 264. The RNA binding; important for wobble base 34 recognition stretch occupies residues 269 to 273; that stretch reads TRNAR. Cysteine 302, cysteine 304, cysteine 307, and histidine 333 together coordinate Zn(2+).

It belongs to the queuine tRNA-ribosyltransferase family. Homodimer. Within each dimer, one monomer is responsible for RNA recognition and catalysis, while the other monomer binds to the replacement base PreQ1. Requires Zn(2+) as cofactor.

It catalyses the reaction 7-aminomethyl-7-carbaguanine + guanosine(34) in tRNA = 7-aminomethyl-7-carbaguanosine(34) in tRNA + guanine. The protein operates within tRNA modification; tRNA-queuosine biosynthesis. Functionally, catalyzes the base-exchange of a guanine (G) residue with the queuine precursor 7-aminomethyl-7-deazaguanine (PreQ1) at position 34 (anticodon wobble position) in tRNAs with GU(N) anticodons (tRNA-Asp, -Asn, -His and -Tyr). Catalysis occurs through a double-displacement mechanism. The nucleophile active site attacks the C1' of nucleotide 34 to detach the guanine base from the RNA, forming a covalent enzyme-RNA intermediate. The proton acceptor active site deprotonates the incoming PreQ1, allowing a nucleophilic attack on the C1' of the ribose to form the product. After dissociation, two additional enzymatic reactions on the tRNA convert PreQ1 to queuine (Q), resulting in the hypermodified nucleoside queuosine (7-(((4,5-cis-dihydroxy-2-cyclopenten-1-yl)amino)methyl)-7-deazaguanosine). This Escherichia coli O81 (strain ED1a) protein is Queuine tRNA-ribosyltransferase.